Consider the following 1239-residue polypeptide: Inner tegument protein (1239 aa).

The segment covering 1–10 (MASAMESDSS) has biased composition (low complexity). 3 disordered regions span residues 1-20 (MASA…DAQP), 672-708 (GESP…GGPW), and 1090-1239 (GRNA…AEDE). The interval 618 to 1239 (NELPKTRSLA…RPPRPTAEDE (622 aa)) is interaction with large tegument protein. Over residues 1115 to 1126 (DSSPFSFSSSDF) the composition is skewed to low complexity. Acidic residues predominate over residues 1127–1136 (SDQDEGEGGE). A compositionally biased stretch (low complexity) spans 1181-1190 (RTTPSPSRRA). The span at 1219-1232 (VRPRTRRGATRRPP) shows a compositional bias: basic residues.

The protein belongs to the herpesviridae inner tegument protein family. Interacts (via C-terminus) with the large tegument protein/LTP (via N-terminus).

It is found in the virion tegument. Its subcellular location is the host cytoplasm. The protein resides in the host nucleus. It localises to the host Golgi apparatus. The protein localises to the host trans-Golgi network. Functionally, plays an essential role in cytoplasmic secondary envelopment during viral egress. Interacts with the capsid via the large tegument protein/LTP and participates in its transport to the host trans-Golgi network (TGN) where secondary envelopment occurs. Modulates tegumentation and capsid accumulation at the viral assembly complex. The chain is Inner tegument protein from Homo sapiens (Human).